Reading from the N-terminus, the 507-residue chain is Glucose-6-phosphate 1-dehydrogenase (507 aa).

NADP(+) is bound by residues arginine 57 and lysine 168. Substrate-binding residues include histidine 198, lysine 202, glutamate 236, and aspartate 255. Catalysis depends on histidine 260, which acts as the Proton acceptor. Lysine 356 is a substrate binding site.

This sequence belongs to the glucose-6-phosphate dehydrogenase family.

It carries out the reaction D-glucose 6-phosphate + NADP(+) = 6-phospho-D-glucono-1,5-lactone + NADPH + H(+). The protein operates within carbohydrate degradation; pentose phosphate pathway; D-ribulose 5-phosphate from D-glucose 6-phosphate (oxidative stage): step 1/3. In terms of biological role, catalyzes the oxidation of glucose 6-phosphate to 6-phosphogluconolactone. This Chlamydia muridarum (strain MoPn / Nigg) protein is Glucose-6-phosphate 1-dehydrogenase.